A 247-amino-acid chain; its full sequence is Cell division protein ZapD (247 aa).

Belongs to the ZapD family. As to quaternary structure, interacts with FtsZ.

Its subcellular location is the cytoplasm. Functionally, cell division factor that enhances FtsZ-ring assembly. Directly interacts with FtsZ and promotes bundling of FtsZ protofilaments, with a reduction in FtsZ GTPase activity. The chain is Cell division protein ZapD from Salmonella arizonae (strain ATCC BAA-731 / CDC346-86 / RSK2980).